The following is a 65-amino-acid chain: Large ribosomal subunit protein bL35 (65 aa).

The segment at 1 to 22 (MPKLKTKSGAAKRFKKTGKGGF) is disordered.

It belongs to the bacterial ribosomal protein bL35 family.

The polypeptide is Large ribosomal subunit protein bL35 (Francisella philomiragia subsp. philomiragia (strain ATCC 25017 / CCUG 19701 / FSC 153 / O#319-036)).